Consider the following 284-residue polypeptide: L-ribulose-5-phosphate 3-epimerase UlaE (284 aa).

This sequence belongs to the L-ribulose-5-phosphate 3-epimerase family.

It catalyses the reaction L-ribulose 5-phosphate = L-xylulose 5-phosphate. Its pathway is cofactor degradation; L-ascorbate degradation; D-xylulose 5-phosphate from L-ascorbate: step 3/4. Functionally, catalyzes the isomerization of L-xylulose-5-phosphate to L-ribulose-5-phosphate. Is involved in the anaerobic L-ascorbate utilization. The sequence is that of L-ribulose-5-phosphate 3-epimerase UlaE from Escherichia coli (strain SMS-3-5 / SECEC).